The sequence spans 418 residues: Putative L-glutamine:3-amino-2,3-dideoxy-scyllo-inosose aminotransferase (418 aa).

K199 carries the post-translational modification N6-(pyridoxal phosphate)lysine.

The protein belongs to the DegT/DnrJ/EryC1 family. L-glutamine:2-deoxy-scyllo-inosose/scyllo-inosose aminotransferase subfamily. Pyridoxal 5'-phosphate is required as a cofactor.

The catalysed reaction is 3-amino-2,3-dideoxy-scyllo-inosose + L-glutamine = 2-deoxystreptamine + 2-oxoglutaramate. The protein operates within metabolic intermediate biosynthesis; 2-deoxystreptamine biosynthesis; 2-deoxystreptamine from D-glucose 6-phosphate: step 4/4. It participates in antibiotic biosynthesis; gentamicin biosynthesis. Catalyzes the transamination of 3-amino-2,3-dideoxy-scyllo-inosose (amino-DOI) into 2-deoxystreptamine (DOS). This chain is Putative L-glutamine:3-amino-2,3-dideoxy-scyllo-inosose aminotransferase (gtmD), found in Micromonospora echinospora (Micromonospora purpurea).